The sequence spans 122 residues: MPRIIGIDIPAKKKLKISLTYIYGIGPALSEEIIAKLQLNPEARAVELTEEEIGRLNSLLQSEYVVEGDLRRRVQSDIKRLISIHAYRGQRHRLSLPVRGQRTKTNSRTRKGKRKTVAGKKK.

The disordered stretch occupies residues 93–122; the sequence is RLSLPVRGQRTKTNSRTRKGKRKTVAGKKK. The span at 101 to 122 shows a compositional bias: basic residues; that stretch reads QRTKTNSRTRKGKRKTVAGKKK.

This sequence belongs to the universal ribosomal protein uS13 family. As to quaternary structure, part of the 30S ribosomal subunit. Forms a loose heterodimer with protein S19. Forms two bridges to the 50S subunit in the 70S ribosome.

Located at the top of the head of the 30S subunit, it contacts several helices of the 16S rRNA. In the 70S ribosome it contacts the 23S rRNA (bridge B1a) and protein L5 of the 50S subunit (bridge B1b), connecting the 2 subunits; these bridges are implicated in subunit movement. Contacts the tRNAs in the A and P-sites. In Chlamydia caviae (strain ATCC VR-813 / DSM 19441 / 03DC25 / GPIC) (Chlamydophila caviae), this protein is Small ribosomal subunit protein uS13.